A 387-amino-acid chain; its full sequence is uncharacterized protein (387 aa).

Its subcellular location is the virion. This is an uncharacterized protein from Acanthamoeba polyphaga (Amoeba).